The following is a 1434-amino-acid chain: Probable ATP-dependent RNA helicase spindle-E (1434 aa).

The region spanning 125 to 292 (LAAINAHPVV…FTTTNSIPPV (168 aa)) is the Helicase ATP-binding domain. 138-145 (GETGCGKT) serves as a coordination point for ATP. The short motif at 238–241 (DEVH) is the DEAH box element. Residues 354–526 (QSRQSYDEAL…NSVLKAKVLN (173 aa)) enclose the Helicase C-terminal domain. The Tudor domain maps to 938-1001 (ASAIAKGMMV…RLMPRELTEQ (64 aa)).

The protein belongs to the DEAD box helicase family. DEAH subfamily.

It localises to the cytoplasm. It is found in the perinuclear region. Its subcellular location is the cytoplasmic ribonucleoprotein granule. It catalyses the reaction ATP + H2O = ADP + phosphate + H(+). Its function is as follows. Probable ATP-binding RNA helicase which plays a central role during spermatogenesis and oogenesis by repressing transposable elements and preventing their mobilization, which is essential for the germline integrity. Acts via the piRNA metabolic process, which mediates the repression of transposable elements during meiosis by forming complexes composed of piRNAs and Piwi and govern the methylation and subsequent repression of transposons. Involved in the repression of LTR retrotransposon copia. Also involved in telomere regulation by repressing specialized telomeric retroelements HeT-A, TAHRE, and TART; Drosophila telomeres being maintained by transposition of specialized telomeric retroelements. Involved in telomeric trans-silencing, a repression mechanism by which a transposon or a transgene inserted in subtelomeric heterochromatin has the capacity to repress in trans in the female germline, a homologous transposon, or transgene located in euchromatin. Involved in the repression of testis-expressed Stellate genes by the homologous Su(Ste) repeats. Required for anteroposterior and dorsoventral axis formation during oogenesis. Key component of the perinuclear meiotic nuage, an electron dense structure involved in the post-transcriptional regulation of transposons and mRNAs; required for recruitment of other nuage comonents including vas, krimp, aub and mael. May have a role in production of piwi-interacting RNA (piRNA). This Drosophila melanogaster (Fruit fly) protein is Probable ATP-dependent RNA helicase spindle-E.